A 141-amino-acid polypeptide reads, in one-letter code: Large ribosomal subunit protein uL11 (141 aa).

This sequence belongs to the universal ribosomal protein uL11 family. In terms of assembly, part of the ribosomal stalk of the 50S ribosomal subunit. Interacts with L10 and the large rRNA to form the base of the stalk. L10 forms an elongated spine to which 2 L12 dimers bind in a sequential fashion forming a pentameric L10(L12)2(L12)2 complex. In stalled/isolated 50S subunits interacts with RqcH. In terms of processing, one or more lysine residues are methylated.

In terms of biological role, forms part of the ribosomal stalk which helps the ribosome interact with GTP-bound translation factors. Required to recruit RqcH, which is part of the ribosome quality control system (RQC), to stalled 50S ribosomal subunits. This Bacillus subtilis (strain 168) protein is Large ribosomal subunit protein uL11.